Here is a 267-residue protein sequence, read N- to C-terminus: Small ribosomal subunit protein uS2 (267 aa).

The tract at residues 224 to 244 is disordered; it reads GRQGEDEDVTEDSFKDNKDAK. Residues 235-244 are compositionally biased toward basic and acidic residues; that stretch reads DSFKDNKDAK.

The protein belongs to the universal ribosomal protein uS2 family.

The sequence is that of Small ribosomal subunit protein uS2 from Lactiplantibacillus plantarum (strain ATCC BAA-793 / NCIMB 8826 / WCFS1) (Lactobacillus plantarum).